The following is a 150-amino-acid chain: MQIILLDKVVNLGNLGEVVKVKDGYARNFLIPSGRARRATEANKAEFEAKRVELEKAAAAKLAEMQAQGEKLGGTTVKLTQKAGVDGRLFGSVTNHDISAELTKQGFPVLKSQIRMPNGPLKTVGDHAVSVALHTDVAVDITVTVYGETA.

This sequence belongs to the bacterial ribosomal protein bL9 family.

In terms of biological role, binds to the 23S rRNA. This chain is Large ribosomal subunit protein bL9, found in Polaromonas sp. (strain JS666 / ATCC BAA-500).